Consider the following 224-residue polypeptide: Uracil phosphoribosyltransferase (224 aa).

38–42 (KGLVK) provides a ligand contact to GTP. 5-phospho-alpha-D-ribose 1-diphosphate is bound by residues R87, R112, and 140 to 148 (DPMIATGST). Residues I204 and 209 to 211 (GDA) each bind uracil. D210 contacts 5-phospho-alpha-D-ribose 1-diphosphate.

The protein belongs to the UPRTase family. The cofactor is Mg(2+).

The catalysed reaction is UMP + diphosphate = 5-phospho-alpha-D-ribose 1-diphosphate + uracil. The protein operates within pyrimidine metabolism; UMP biosynthesis via salvage pathway; UMP from uracil: step 1/1. Its activity is regulated as follows. Allosterically activated by GTP. Functionally, catalyzes the conversion of uracil and 5-phospho-alpha-D-ribose 1-diphosphate (PRPP) to UMP and diphosphate. This is Uracil phosphoribosyltransferase from Thermococcus gammatolerans (strain DSM 15229 / JCM 11827 / EJ3).